The primary structure comprises 199 residues: Thymidylate kinase (199 aa).

7 to 14 is a binding site for ATP; sequence GIDGSGKS.

This sequence belongs to the thymidylate kinase family.

The catalysed reaction is dTMP + ATP = dTDP + ADP. Functionally, phosphorylation of dTMP to form dTDP in both de novo and salvage pathways of dTTP synthesis. This chain is Thymidylate kinase, found in Neorickettsia sennetsu (strain ATCC VR-367 / Miyayama) (Ehrlichia sennetsu).